A 286-amino-acid polypeptide reads, in one-letter code: Probable protein VP2 (286 aa).

Disordered stretches follow at residues leucine 67–aspartate 108 and glutamine 184–isoleucine 286. Over residues glycine 222 to proline 241 the composition is skewed to basic residues. The segment covering serine 242–threonine 265 has biased composition (low complexity).

Phosphorylated at C-terminal serines.

In Homo sapiens (Human), this protein is Probable protein VP2.